We begin with the raw amino-acid sequence, 224 residues long: Uracil-DNA glycosylase (224 aa).

The Proton acceptor role is filled by Asp62.

The protein belongs to the uracil-DNA glycosylase (UDG) superfamily. UNG family.

Its subcellular location is the cytoplasm. It carries out the reaction Hydrolyzes single-stranded DNA or mismatched double-stranded DNA and polynucleotides, releasing free uracil.. Excises uracil residues from the DNA which can arise as a result of misincorporation of dUMP residues by DNA polymerase or due to deamination of cytosine. This Aliivibrio fischeri (strain ATCC 700601 / ES114) (Vibrio fischeri) protein is Uracil-DNA glycosylase.